The primary structure comprises 207 residues: Outer-membrane lipoprotein LolB (207 aa).

Residues 1–21 (MPLPDFRLIRLLPLAALVLTA) form the signal peptide. The N-palmitoyl cysteine moiety is linked to residue C22. Residue C22 is the site of S-diacylglycerol cysteine attachment.

It belongs to the LolB family. In terms of assembly, monomer.

The protein localises to the cell outer membrane. Plays a critical role in the incorporation of lipoproteins in the outer membrane after they are released by the LolA protein. The sequence is that of Outer-membrane lipoprotein LolB from Shigella dysenteriae serotype 1 (strain Sd197).